The following is a 180-amino-acid chain: ATP synthase subunit b (180 aa).

A helical transmembrane segment spans residues 15-35 (LIPEVPELVIGLLAFAIVFFV).

The protein belongs to the ATPase B chain family. F-type ATPases have 2 components, F(1) - the catalytic core - and F(0) - the membrane proton channel. F(1) has five subunits: alpha(3), beta(3), gamma(1), delta(1), epsilon(1). F(0) has three main subunits: a(1), b(2) and c(10-14). The alpha and beta chains form an alternating ring which encloses part of the gamma chain. F(1) is attached to F(0) by a central stalk formed by the gamma and epsilon chains, while a peripheral stalk is formed by the delta and b chains.

It is found in the cell membrane. In terms of biological role, f(1)F(0) ATP synthase produces ATP from ADP in the presence of a proton or sodium gradient. F-type ATPases consist of two structural domains, F(1) containing the extramembraneous catalytic core and F(0) containing the membrane proton channel, linked together by a central stalk and a peripheral stalk. During catalysis, ATP synthesis in the catalytic domain of F(1) is coupled via a rotary mechanism of the central stalk subunits to proton translocation. Component of the F(0) channel, it forms part of the peripheral stalk, linking F(1) to F(0). The polypeptide is ATP synthase subunit b (Streptomyces avermitilis (strain ATCC 31267 / DSM 46492 / JCM 5070 / NBRC 14893 / NCIMB 12804 / NRRL 8165 / MA-4680)).